The sequence spans 87 residues: U3-theraphotoxin-Hhn1o (87 aa).

Positions 1-24 are cleaved as a signal peptide; that stretch reads MVNMKASMFLTFAGLVLLFVVCYA. Residues 25–52 constitute a propeptide that is removed on maturation; the sequence is SESEEKEFPKEMLSSIFAVDNDFKQEER. 2 disulfide bridges follow: C54/C67 and C61/C72.

Belongs to the neurotoxin 10 (Hwtx-1) family. 51 (Hntx-8) subfamily. Hntx-8 sub-subfamily. Expressed by the venom gland.

The protein resides in the secreted. In terms of biological role, ion channel inhibitor. This chain is U3-theraphotoxin-Hhn1o, found in Cyriopagopus hainanus (Chinese bird spider).